Consider the following 885-residue polypeptide: Disease resistance protein RFL1 (885 aa).

Residues 27–61 are a coiled coil; it reads SYIQNLSENLASLQKAMGVLNAKRDDVQGRINREE. The 303-residue stretch at 141 to 443 folds into the NB-ARC domain; the sequence is EAAPIAEVEE…CEGFIKEKQG (303 aa). 183–190 is a binding site for ATP; the sequence is GMGGVGKT. 7 LRR repeats span residues 517–538, 539–561, 564–586, 588–610, 611–633, 634–655, and 657–679; these read AVKR…PECV, ELIT…FFRC, SLAV…ISEL, SLQY…HELR, KLVH…SYLS, SLRT…MKEL, and LLEH…LFCY.

The protein belongs to the disease resistance NB-LRR family.

In terms of biological role, disease resistance (R) protein. The polypeptide is Disease resistance protein RFL1 (RFL1) (Arabidopsis thaliana (Mouse-ear cress)).